A 344-amino-acid polypeptide reads, in one-letter code: MASRQDRREARAEADARRAAEEIARARDERVMQAEVDARSAADEIARARADRGAATMGADTAHHAAGGGGILESVQEGAKSFVSAVGRTFGGARDTAAEKTSQTADATRDKLGEYKDYTADKARETNDSVARKTNETADASRDKLGEYKDYTADKTRETKDAVAQKASDASEATKNKLGEYKDALARKTRDAKDTTAQKATEFKDGVKATAQETRDATADTARKAKDATKDTTQTAADKARETAATHDDATDKGQGQGLLGALGNVTGAIKEKLTVSPAATQEHLGGGEERAVKERAAEKAASVYFEEKDRLTRERAAERVDKCVEKCVEGCPDATCAHRHGKM.

Disordered stretches follow at residues 1-20 and 116-258; these read MASRQDRREARAEADARRAA and KDYT…QGQG. Positions 3–52 form a coiled coil; sequence SRQDRREARAEADARRAAEEIARARDERVMQAEVDARSAADEIARARADR. 3 stretches are compositionally biased toward basic and acidic residues: residues 116-163, 172-230, and 238-252; these read KDYT…KDAV, EATK…DATK, and DKARETAATHDDATD.

The protein belongs to the LEA type 4 family. Expressed in embryos.

The protein localises to the nucleus. Its function is as follows. Involved in abiotic stress responses. May function as chaperone and contribute to prevent the formation of damaging protein aggregates. The polypeptide is Late embryogenesis abundant protein 17 (Oryza sativa subsp. japonica (Rice)).